Consider the following 243-residue polypeptide: Probable transcriptional regulatory protein BP2308 (243 aa).

Residues 1 to 21 (MAGHSKWANIQHRKGRQDAKR) are disordered.

Belongs to the TACO1 family.

It localises to the cytoplasm. In Bordetella pertussis (strain Tohama I / ATCC BAA-589 / NCTC 13251), this protein is Probable transcriptional regulatory protein BP2308.